Reading from the N-terminus, the 316-residue chain is ATP synthase gamma chain (316 aa).

The protein belongs to the ATPase gamma chain family. As to quaternary structure, F-type ATPases have 2 components, CF(1) - the catalytic core - and CF(0) - the membrane proton channel. CF(1) has five subunits: alpha(3), beta(3), gamma(1), delta(1), epsilon(1). CF(0) has three main subunits: a, b and c.

It localises to the cellular thylakoid membrane. Its function is as follows. Produces ATP from ADP in the presence of a proton gradient across the membrane. The gamma chain is believed to be important in regulating ATPase activity and the flow of protons through the CF(0) complex. The protein is ATP synthase gamma chain of Prochlorococcus marinus (strain NATL1A).